The chain runs to 601 residues: CDPK-related kinase 5 (601 aa).

Polar residues predominate over residues 1–19 (MGLCTSKPNSSNSDQTPAR). Disordered regions lie at residues 1-55 (MGLC…KSPF) and 70-98 (KKTP…PPPS). The N-myristoyl glycine moiety is linked to residue Gly2. Positions 26–35 (SESVKPSSSS) are enriched in low complexity. Over residues 36–48 (VNGEDQCVTTTNN) the composition is skewed to polar residues. The region spanning 148-410 (YELGDEVGRG…AAQALSHPWI (263 aa)) is the Protein kinase domain. ATP-binding positions include 154–162 (VGRGHFGYT) and Lys180. Asp276 acts as the Proton acceptor in catalysis. Ser316 is subject to Phosphoserine. An autoinhibitory domain region spans residues 415–445 (DAKVPMDILVFKLMRAYLRSSSLRKAALRAL). Residues 434 to 454 (SSSLRKAALRALSKTLTVDEL) are calmodulin binding (CaMBD). 4 EF-hand domains span residues 452–488 (DELF…ATDA), 489–524 (MKDS…VHQL), 525–564 (EALD…GPSV), and 567–596 (HAVL…VSSR). Ca(2+)-binding residues include Ser467, Asn469, Thr471, Asn476, Arg508, Glu513, Asn546, Glu553, Asp578, and Lys580. The residue at position 582 (Ser582) is a Phosphoserine.

This sequence belongs to the protein kinase superfamily. Ser/Thr protein kinase family. CDPK subfamily. In terms of assembly, binds calmodulin (CaM) in a calcium-dependent manner.

The protein resides in the membrane. The catalysed reaction is L-seryl-[protein] + ATP = O-phospho-L-seryl-[protein] + ADP + H(+). The enzyme catalyses L-threonyl-[protein] + ATP = O-phospho-L-threonyl-[protein] + ADP + H(+). Activated by calcium and calmodulin. Autophosphorylation may play an important role in the regulation of the kinase activity. In terms of biological role, may play a role in signal transduction pathways that involve calcium as a second messenger. In Arabidopsis thaliana (Mouse-ear cress), this protein is CDPK-related kinase 5 (CRK5).